We begin with the raw amino-acid sequence, 224 residues long: 7-cyano-7-deazaguanine synthase (224 aa).

An ATP-binding site is contributed by Leu8–Ile18. Zn(2+)-binding residues include Cys186, Cys196, Cys199, and Cys202.

The protein belongs to the QueC family. The cofactor is Zn(2+).

It carries out the reaction 7-carboxy-7-deazaguanine + NH4(+) + ATP = 7-cyano-7-deazaguanine + ADP + phosphate + H2O + H(+). It functions in the pathway purine metabolism; 7-cyano-7-deazaguanine biosynthesis. In terms of biological role, catalyzes the ATP-dependent conversion of 7-carboxy-7-deazaguanine (CDG) to 7-cyano-7-deazaguanine (preQ(0)). This chain is 7-cyano-7-deazaguanine synthase, found in Xanthomonas campestris pv. campestris (strain 8004).